The following is a 333-amino-acid chain: Regulator of rDNA transcription protein 5 (333 aa).

The disordered stretch occupies residues 1-22; it reads MFERQSNNPEPIEVSDNNPERE. The RRM 1 domain occupies 31–114; the sequence is TRIYISNLDY…RNLKVKLYVP (84 aa). 2 disordered regions span residues 123 to 185 and 281 to 333; these read PAPK…DTVY and GIAE…SVVA. Positions 125–137 are enriched in basic residues; sequence PKPRRLSKLRRSK. Polar residues-rich tracts occupy residues 145-160 and 169-182; these read NAASQDPTVEATQERG and AANNAKQAKPTSDD. Positions 182 to 267 constitute an RRM 2 domain; the sequence is DTVYCGYLPK…KKISVKPAYI (86 aa). The segment covering 298-308 has biased composition (gly residues); sequence GNGGQPAGPGV. The span at 313–327 shows a compositional bias: polar residues; the sequence is SNPQQNCDNSNNVQP.

This sequence belongs to the RRT5 family.

May be involved in the modulation of rDNA transcription. This Vanderwaltozyma polyspora (strain ATCC 22028 / DSM 70294 / BCRC 21397 / CBS 2163 / NBRC 10782 / NRRL Y-8283 / UCD 57-17) (Kluyveromyces polysporus) protein is Regulator of rDNA transcription protein 5 (RRT5).